Here is a 498-residue protein sequence, read N- to C-terminus: Cytochrome c-552 (498 aa).

The N-terminal stretch at 1 to 31 (MKNKERKLKSWQGWLIFSSSMVVVFCLGLLA) is a signal peptide. Heme c is bound at residue His119. Heme contacts are provided by Cys148, Cys151, and Lys152. Positions 186, 189, 190, 228, 231, and 232 each coordinate heme c. The Ca(2+) site is built by Glu234, Tyr235, Lys280, and Gln282. Tyr235 provides a ligand contact to substrate. His283 provides a ligand contact to substrate. Residues His294, Cys301, Cys304, His305, His319, Cys332, Cys335, His336, and His411 each contribute to the heme c site.

This sequence belongs to the cytochrome c-552 family. Ca(2+) serves as cofactor. It depends on heme c as a cofactor.

It localises to the periplasm. It catalyses the reaction 6 Fe(III)-[cytochrome c] + NH4(+) + 2 H2O = 6 Fe(II)-[cytochrome c] + nitrite + 8 H(+). Its pathway is nitrogen metabolism; nitrate reduction (assimilation). Functionally, catalyzes the reduction of nitrite to ammonia, consuming six electrons in the process. This chain is Cytochrome c-552, found in Porphyromonas gingivalis (strain ATCC BAA-308 / W83).